A 383-amino-acid polypeptide reads, in one-letter code: ATP phosphoribosyltransferase regulatory subunit (383 aa).

It belongs to the class-II aminoacyl-tRNA synthetase family. HisZ subfamily. Heteromultimer composed of HisG and HisZ subunits.

It is found in the cytoplasm. It functions in the pathway amino-acid biosynthesis; L-histidine biosynthesis; L-histidine from 5-phospho-alpha-D-ribose 1-diphosphate: step 1/9. Required for the first step of histidine biosynthesis. May allow the feedback regulation of ATP phosphoribosyltransferase activity by histidine. The chain is ATP phosphoribosyltransferase regulatory subunit from Neisseria gonorrhoeae (strain ATCC 700825 / FA 1090).